Consider the following 238-residue polypeptide: Valine-rich protein (238 aa).

The signal sequence occupies residues 1-16; sequence MQAVLLVVALFGAALA.

As to expression, prismatic layer of shell (at protein level). Expressed primarily in the mantle with highest level in the mantle edge and lower level in the mantle pallium.

The protein resides in the secreted. The sequence is that of Valine-rich protein from Margaritifera margaritifera (Freshwater pearl mussel).